A 172-amino-acid polypeptide reads, in one-letter code: Shikimate kinase (172 aa).

11–16 (GSGKTT) contacts ATP. Thr15 is a Mg(2+) binding site. Residues Asp33, Arg57, and Gly79 each contribute to the substrate site. Residue Arg117 participates in ATP binding. Arg136 serves as a coordination point for substrate.

This sequence belongs to the shikimate kinase family. Monomer. The cofactor is Mg(2+).

It is found in the cytoplasm. It catalyses the reaction shikimate + ATP = 3-phosphoshikimate + ADP + H(+). It participates in metabolic intermediate biosynthesis; chorismate biosynthesis; chorismate from D-erythrose 4-phosphate and phosphoenolpyruvate: step 5/7. Its function is as follows. Catalyzes the specific phosphorylation of the 3-hydroxyl group of shikimic acid using ATP as a cosubstrate. The protein is Shikimate kinase of Caldicellulosiruptor bescii (strain ATCC BAA-1888 / DSM 6725 / KCTC 15123 / Z-1320) (Anaerocellum thermophilum).